We begin with the raw amino-acid sequence, 415 residues long: NAD-dependent protein deacetylase hst4 (415 aa).

The interval methionine 1–lysine 26 is disordered. Positions threonine 40–proline 337 constitute a Deacetylase sirtuin-type domain. Residues glycine 65–phenylalanine 84 and glutamine 153–aspartate 156 each bind NAD(+). The Proton acceptor role is filled by histidine 184. Positions 192, 195, 214, and 217 each coordinate Zn(2+). Residues glycine 273 to serine 275, asparagine 303 to aspartate 305, and leucine 323 contribute to the NAD(+) site.

This sequence belongs to the sirtuin family. Class I subfamily. Zn(2+) serves as cofactor.

It is found in the nucleus. It localises to the nucleolus. The catalysed reaction is N(6)-acetyl-L-lysyl-[protein] + NAD(+) + H2O = 2''-O-acetyl-ADP-D-ribose + nicotinamide + L-lysyl-[protein]. In terms of biological role, NAD-dependent histone deacetylase, which contributes to both telomeric and centromeric silencing, proper cell cycle progression, DNA damage control, recombination, and genomic maintenance. The protein is NAD-dependent protein deacetylase hst4 (hst4) of Schizosaccharomyces pombe (strain 972 / ATCC 24843) (Fission yeast).